A 699-amino-acid polypeptide reads, in one-letter code: Polyribonucleotide nucleotidyltransferase (699 aa).

2 residues coordinate Mg(2+): aspartate 485 and aspartate 491. Residues 552–611 form the KH domain; the sequence is PRITTIKINPEKIRDVIGKGGAVIRALTEETGTTIELEDDGTVKIASSNGDATREAIRRI. Residues 621 to 689 enclose the S1 motif domain; sequence GRIYNGKVIR…RQGRVRLSIK (69 aa).

Belongs to the polyribonucleotide nucleotidyltransferase family. In terms of assembly, component of the RNA degradosome, which is a multiprotein complex involved in RNA processing and mRNA degradation. Requires Mg(2+) as cofactor.

It is found in the cytoplasm. It catalyses the reaction RNA(n+1) + phosphate = RNA(n) + a ribonucleoside 5'-diphosphate. Its function is as follows. Involved in mRNA degradation. Catalyzes the phosphorolysis of single-stranded polyribonucleotides processively in the 3'- to 5'-direction. In Shewanella sp. (strain ANA-3), this protein is Polyribonucleotide nucleotidyltransferase.